A 291-amino-acid chain; its full sequence is Nucleotide-binding protein LGAS_1315 (291 aa).

13-20 contributes to the ATP binding site; the sequence is GMSGAGKT. Residue 63–66 coordinates GTP; sequence DLRV.

This sequence belongs to the RapZ-like family.

Displays ATPase and GTPase activities. This Lactobacillus gasseri (strain ATCC 33323 / DSM 20243 / BCRC 14619 / CIP 102991 / JCM 1131 / KCTC 3163 / NCIMB 11718 / NCTC 13722 / AM63) protein is Nucleotide-binding protein LGAS_1315.